The primary structure comprises 406 residues: Argininosuccinate synthase (406 aa).

ATP-binding positions include 10-18 (AYSGGLDTS) and Ala-37. Tyr-88 and Ser-93 together coordinate L-citrulline. Gly-118 is an ATP binding site. L-aspartate contacts are provided by Thr-120, Asn-124, and Asp-125. L-citrulline is bound at residue Asn-124. L-citrulline-binding residues include Arg-128, Ser-179, Ser-188, Glu-264, and Tyr-276.

It belongs to the argininosuccinate synthase family. Type 1 subfamily. Homotetramer.

It is found in the cytoplasm. It catalyses the reaction L-citrulline + L-aspartate + ATP = 2-(N(omega)-L-arginino)succinate + AMP + diphosphate + H(+). It functions in the pathway amino-acid biosynthesis; L-arginine biosynthesis; L-arginine from L-ornithine and carbamoyl phosphate: step 2/3. The polypeptide is Argininosuccinate synthase (Dinoroseobacter shibae (strain DSM 16493 / NCIMB 14021 / DFL 12)).